A 96-amino-acid chain; its full sequence is Probable spanin, outer lipoprotein subunit (96 aa).

Residues 1–24 (MRTKIFAAGTVLTCLMLCAGCTSA) form the signal peptide. Residues 25 to 96 (PPAPTPVIVP…QTRQPAQGAD (72 aa)) lie on the Periplasmic side of the membrane. The stretch at 54-78 (GDLSADIRQLENALARCASQVKMIK) forms a coiled coil.

In terms of assembly, interacts (via C-terminus) with the spanin inner membrane subunit (via C-terminus). Part of the spanin complex which spans the entire periplasmic space. The spanin complex is composed of spanin inner membrane subunit and spanin outer membrane subunit.

It localises to the host cell outer membrane. Component of the spanin complex that disrupts the host outer membrane and participates in cell lysis during virus exit. The spanin complex conducts the final step in host lysis by disrupting the outer membrane after holin and endolysin action have permeabilized the inner membrane and degraded the host peptidoglycans. Host outer membrane disruption is possibly due to local fusion between the inner and outer membrane performed by the spanin complex. The protein is Probable spanin, outer lipoprotein subunit (lysC) of Enterobacteriaceae (Bacteriophage P2).